Here is a 420-residue protein sequence, read N- to C-terminus: Putative FBD-associated F-box protein At1g78730 (420 aa).

The F-box domain occupies 21–71 (LDWLRKLPDSLLCQVFLNLPTKDVVKTSVLSSTWGNIWRSVPGLDLGYGDF). The region spanning 341–390 (ISILPGPQCNLPALEFVDILKPMVEKETELKLMSYFLEKSTILKKLTLRL) is the FBD domain.

The chain is Putative FBD-associated F-box protein At1g78730 from Arabidopsis thaliana (Mouse-ear cress).